Reading from the N-terminus, the 563-residue chain is DEAD-box ATP-dependent RNA helicase 25 (563 aa).

The tract at residues 21 to 57 is disordered; that stretch reads KKLTSDEDGSGKLVKDNNKSLKRGREGKSDVDEPLIK. Residues 23–56 show a composition bias toward basic and acidic residues; the sequence is LTSDEDGSGKLVKDNNKSLKRGREGKSDVDEPLI. Serine 25 carries the phosphoserine modification. Residues 80–108 carry the Q motif motif; it reads TRFDQFPLSPLTLKGIEDAGFKTMTVVQE. In terms of domain architecture, Helicase ATP-binding spans 111–294; sequence LPLILQGKDI…HVALKRDHEF (184 aa). 124–131 contributes to the ATP binding site; that stretch reads AKTGTGKT. Positions 242 to 245 match the DEAD box motif; it reads DEAD. A Helicase C-terminal domain is found at 328–479; the sequence is LLKKHITDNV…AVKKVQKGLI (152 aa).

It belongs to the DEAD box helicase family.

It carries out the reaction ATP + H2O = ADP + phosphate + H(+). The polypeptide is DEAD-box ATP-dependent RNA helicase 25 (RH25) (Arabidopsis thaliana (Mouse-ear cress)).